Consider the following 433-residue polypeptide: GTPase Obg (433 aa).

The region spanning 2 to 160 (PTFVDQTKIE…RVLRLELKLL (159 aa)) is the Obg domain. One can recognise an OBG-type G domain in the interval 161 to 334 (ADVGLVGFPS…LMNDTATLVE (174 aa)). GTP is bound by residues 167-174 (GFPSVGKS), 192-196 (FTTLT), 214-217 (DLPG), 284-287 (SQMD), and 315-317 (SSV). Positions 174 and 194 each coordinate Mg(2+). An OCT domain is found at 355–433 (YKAPQRNEFM…IGKFVFEFVQ (79 aa)).

It belongs to the TRAFAC class OBG-HflX-like GTPase superfamily. OBG GTPase family. As to quaternary structure, monomer. The cofactor is Mg(2+).

It is found in the cytoplasm. Functionally, an essential GTPase which binds GTP, GDP and possibly (p)ppGpp with moderate affinity, with high nucleotide exchange rates and a fairly low GTP hydrolysis rate. Plays a role in control of the cell cycle, stress response, ribosome biogenesis and in those bacteria that undergo differentiation, in morphogenesis control. The polypeptide is GTPase Obg (Lactobacillus acidophilus (strain ATCC 700396 / NCK56 / N2 / NCFM)).